The sequence spans 472 residues: Flap endonuclease 1 (472 aa).

Residues methionine 1–arginine 106 are N-domain. Aspartate 34 contacts Mg(2+). Arginine 47 and arginine 72 together coordinate DNA. Mg(2+) is bound by residues aspartate 88, glutamate 160, glutamate 162, aspartate 181, and aspartate 183. The tract at residues threonine 124–histidine 263 is I-domain. Glutamate 160 contributes to the DNA binding site. Residues glycine 241 and aspartate 243 each coordinate DNA. A Mg(2+)-binding site is contributed by aspartate 243. Residues alanine 348 to phenylalanine 356 form an interaction with PCNA region.

The protein belongs to the XPG/RAD2 endonuclease family. FEN1 subfamily. As to quaternary structure, interacts with PCNA. Three molecules of FEN1 bind to one PCNA trimer with each molecule binding to one PCNA monomer. PCNA stimulates the nuclease activity without altering cleavage specificity. Requires Mg(2+) as cofactor. In terms of processing, phosphorylated. Phosphorylation upon DNA damage induces relocalization to the nuclear plasma.

Its subcellular location is the nucleus. The protein resides in the nucleolus. It localises to the nucleoplasm. It is found in the mitochondrion. In terms of biological role, structure-specific nuclease with 5'-flap endonuclease and 5'-3' exonuclease activities involved in DNA replication and repair. During DNA replication, cleaves the 5'-overhanging flap structure that is generated by displacement synthesis when DNA polymerase encounters the 5'-end of a downstream Okazaki fragment. It enters the flap from the 5'-end and then tracks to cleave the flap base, leaving a nick for ligation. Also involved in the long patch base excision repair (LP-BER) pathway, by cleaving within the apurinic/apyrimidinic (AP) site-terminated flap. Acts as a genome stabilization factor that prevents flaps from equilibrating into structures that lead to duplications and deletions. Also possesses 5'-3' exonuclease activity on nicked or gapped double-stranded DNA, and exhibits RNase H activity. Also involved in replication and repair of rDNA and in repairing mitochondrial DNA. This chain is Flap endonuclease 1, found in Cryptosporidium muris (strain RN66).